The sequence spans 113 residues: Large ribosomal subunit protein uL22 (113 aa).

Belongs to the universal ribosomal protein uL22 family. Part of the 50S ribosomal subunit.

This protein binds specifically to 23S rRNA; its binding is stimulated by other ribosomal proteins, e.g. L4, L17, and L20. It is important during the early stages of 50S assembly. It makes multiple contacts with different domains of the 23S rRNA in the assembled 50S subunit and ribosome. In terms of biological role, the globular domain of the protein is located near the polypeptide exit tunnel on the outside of the subunit, while an extended beta-hairpin is found that lines the wall of the exit tunnel in the center of the 70S ribosome. The polypeptide is Large ribosomal subunit protein uL22 (Xanthomonas oryzae pv. oryzae (strain MAFF 311018)).